The following is a 2157-amino-acid chain: Unconventional myosin-IXb (2157 aa).

S2 bears the N-acetylserine mark. In terms of domain architecture, Ras-associating spans 15–114 (AAYHLHIYPQ…YYFLLQERNA (100 aa)). The region spanning 146 to 953 (ADFDDLCNLP…ERQALQETLH (808 aa)) is the Myosin motor domain. Residue 239–246 (GESGSGKT) coordinates ATP. Residues 709–734 (AEKAAGMSSPGAQSHPEELPRGASTP) form a disordered region. Phosphoserine is present on residues S716 and S717. Residues 844-855 (KAEPFFIRCIRS) form an actin-binding region. The neck or regulatory domain stretch occupies residues 940 to 1044 (LKETERQALQ…CRGHLQRKSF (105 aa)). 4 consecutive IQ domains span residues 957–977 (VRKI…RHFL), 979–1000 (MKRA…RALE), 1001–1023 (RTQA…LYRH), and 1024–1053 (QKQS…EKQK). S1045 is modified (phosphoserine). The tail stretch occupies residues 1045 to 2157 (SQMISEKQKA…LPPASGQTNG (1113 aa)). Residues 1046–1071 (QMISEKQKAEEKEREALEAARAGAEE) are a coiled coil. Disordered stretches follow at residues 1046–1298 (QMIS…TQIQ), 1320–1410 (AAAS…GSQV), and 1455–1484 (GLEA…KKNR). 5 stretches are compositionally biased toward basic and acidic residues: residues 1050 to 1063 (EKQK…EALE), 1109 to 1122 (SPLE…EAPS), 1136 to 1160 (ESHE…EHVK), 1168 to 1183 (SCKE…RRVT), and 1191 to 1201 (LEDKKESREDE). Phosphoserine is present on residues S1114, S1115, and S1122. The segment covering 1211–1222 (ENTSQKQPTEQP) has biased composition (polar residues). A phosphoserine mark is found at S1242, S1253, S1261, and S1267. T1271 bears the Phosphothreonine mark. S1290, S1323, and S1331 each carry phosphoserine. T1346 is subject to Phosphothreonine. Residues S1354, S1356, and S1405 each carry the phosphoserine modification. Positions 1467–1478 (AAGEKRTKEPGG) are enriched in basic and acidic residues. A Phorbol-ester/DAG-type zinc finger spans residues 1632–1681 (GHVFASYQVSIPQSCEQCLSYIWLMDKALLCSVCKMTCHKKCVHKIQSHC). Residues 1703–1888 (DSLTSDKASV…MLIKEQMRKY (186 aa)) enclose the Rho-GAP domain. An interaction with RHOA region spans residues 1739-1744 (AANRTR). Residues 1880 to 1901 (LIKEQMRKYKVKMEEISQLEAA) adopt a coiled-coil conformation. S1926, S1972, S1992, and S1999 each carry phosphoserine. Residues 1959 to 1989 (EDREKEILIERIQSIKEEKEDITYRLPELDP) adopt a coiled-coil conformation. Basic and acidic residues predominate over residues 1980–1993 (ITYRLPELDPRGSD). The tract at residues 1980 to 2157 (ITYRLPELDP…LPPASGQTNG (178 aa)) is disordered. T2005 is modified (phosphothreonine). Pro residues predominate over residues 2021-2037 (PPAPALPCPGAPTPSPL). At S2050 the chain carries Phosphoserine. A compositionally biased stretch (low complexity) spans 2081 to 2093 (PRWAPGAREAAAP). Positions 2095 to 2106 (RRREPPARRPDQ) are enriched in basic and acidic residues. S2141 carries the phosphoserine modification.

It belongs to the TRAFAC class myosin-kinesin ATPase superfamily. Myosin family. In terms of assembly, interacts (via IQ domains) with CALM. Interacts with RHOA. Interacts (via Rho-GAP domain) with ROBO1; this inhibits the interaction with RHOA and the stimulation of RHOA GTPase activity, and thereby increases the levels of active RHOA. In terms of tissue distribution, detected in peripheral blood leukocytes (at protein level). Expressed predominantly in peripheral blood leukocytes and at lower levels, in thymus, spleen, testis, prostate, ovary, brain, small intestine and lung.

Its subcellular location is the cytoplasm. It localises to the cell cortex. The protein localises to the perinuclear region. The protein resides in the cytoskeleton. In terms of biological role, myosins are actin-based motor molecules with ATPase activity. Unconventional myosins serve in intracellular movements. Binds actin with high affinity both in the absence and presence of ATP and its mechanochemical activity is inhibited by calcium ions. Also acts as a GTPase activator for RHOA. Plays a role in the regulation of cell migration via its role as RHOA GTPase activator. This is regulated by its interaction with the SLIT2 receptor ROBO1; interaction with ROBO1 impairs interaction with RHOA and subsequent activation of RHOA GTPase activity, and thereby leads to increased levels of active, GTP-bound RHOA. In Homo sapiens (Human), this protein is Unconventional myosin-IXb (MYO9B).